The following is a 172-amino-acid chain: Adenylate kinase isoenzyme 6 (172 aa).

The ATP site is built by Gly13, Gly15, Lys16, Thr17, and Thr18. The tract at residues 33–56 is NMP; sequence NVGDLAREEQLYDGYDEEYDCPIL. The NMPbind stretch occupies residues 33 to 56; the sequence is NVGDLAREEQLYDGYDEEYDCPIL. Positions 108–118 are LID; it reads TRGYNEKKLTD. Residues Arg109 and Lys148 each contribute to the ATP site.

The protein belongs to the adenylate kinase family. AK6 subfamily. In terms of assembly, monomer and homodimer. Interacts with small ribosomal subunit protein uS11. Not a structural component of 43S pre-ribosomes, but transiently interacts with them by binding to uS11. Interacts with COIL (via C-terminus). As to expression, expressed in heart, brain, placenta, lung, liver, skeletal muscle, kidney, pancreas, chorionic villi and the central nervous system.

Its subcellular location is the cytoplasm. It is found in the nucleus. The protein localises to the nucleoplasm. It localises to the cajal body. It catalyses the reaction AMP + ATP = 2 ADP. The catalysed reaction is ATP + H2O = ADP + phosphate + H(+). In terms of biological role, broad-specificity nucleoside monophosphate (NMP) kinase that catalyzes the reversible transfer of the terminal phosphate group between nucleoside triphosphates and monophosphates. Also has ATPase activity. Involved in the late cytoplasmic maturation steps of the 40S ribosomal particles, specifically 18S rRNA maturation. While NMP activity is not required for ribosome maturation, ATPase activity is. Associates transiently with small ribosomal subunit protein uS11. ATP hydrolysis breaks the interaction with uS11. May temporarily remove uS11 from the ribosome to enable a conformational change of the ribosomal RNA that is needed for the final maturation step of the small ribosomal subunit. Its NMP activity may have a role in nuclear energy homeostasis. AMP and dAMP are the preferred substrates, but CMP and dCMP are also good substrates. IMP is phosphorylated to a much lesser extent. All nucleoside triphosphates ATP, GTP, UTP, CTP, dATP, dCTP, dGTP, and TTP are accepted as phosphate donors. CTP is the best phosphate donor, followed by UTP, ATP, GTP and dCTP. May be involved in regulation of Cajal body (CB) formation. This is Adenylate kinase isoenzyme 6 from Homo sapiens (Human).